A 105-amino-acid polypeptide reads, in one-letter code: Small ribosomal subunit protein uS10 (105 aa).

Belongs to the universal ribosomal protein uS10 family. As to quaternary structure, part of the 30S ribosomal subunit.

Its function is as follows. Involved in the binding of tRNA to the ribosomes. This chain is Small ribosomal subunit protein uS10, found in Lachnoclostridium phytofermentans (strain ATCC 700394 / DSM 18823 / ISDg) (Clostridium phytofermentans).